The primary structure comprises 95 residues: Co-chaperonin GroES (95 aa).

The protein belongs to the GroES chaperonin family. As to quaternary structure, heptamer of 7 subunits arranged in a ring. Interacts with the chaperonin GroEL.

Its subcellular location is the cytoplasm. Together with the chaperonin GroEL, plays an essential role in assisting protein folding. The GroEL-GroES system forms a nano-cage that allows encapsulation of the non-native substrate proteins and provides a physical environment optimized to promote and accelerate protein folding. GroES binds to the apical surface of the GroEL ring, thereby capping the opening of the GroEL channel. The chain is Co-chaperonin GroES from Dichelobacter nodosus (strain VCS1703A).